We begin with the raw amino-acid sequence, 119 residues long: Dihydroneopterin aldolase (119 aa).

Substrate-binding positions include glutamate 21, tyrosine 53, and 72–73 (IE). The active-site Proton donor/acceptor is the lysine 99.

Belongs to the DHNA family.

It catalyses the reaction 7,8-dihydroneopterin = 6-hydroxymethyl-7,8-dihydropterin + glycolaldehyde. The protein operates within cofactor biosynthesis; tetrahydrofolate biosynthesis; 2-amino-4-hydroxy-6-hydroxymethyl-7,8-dihydropteridine diphosphate from 7,8-dihydroneopterin triphosphate: step 3/4. In terms of biological role, catalyzes the conversion of 7,8-dihydroneopterin to 6-hydroxymethyl-7,8-dihydropterin. The sequence is that of Dihydroneopterin aldolase (folB) from Streptococcus pyogenes serotype M3 (strain ATCC BAA-595 / MGAS315).